The chain runs to 178 residues: ATP-dependent protease subunit HslV (178 aa).

Thr7 is an active-site residue. Positions 162, 165, and 168 each coordinate Na(+).

Belongs to the peptidase T1B family. HslV subfamily. In terms of assembly, a double ring-shaped homohexamer of HslV is capped on each side by a ring-shaped HslU homohexamer. The assembly of the HslU/HslV complex is dependent on binding of ATP.

The protein localises to the cytoplasm. It catalyses the reaction ATP-dependent cleavage of peptide bonds with broad specificity.. Its activity is regulated as follows. Allosterically activated by HslU binding. Its function is as follows. Protease subunit of a proteasome-like degradation complex believed to be a general protein degrading machinery. In Sulfurihydrogenibium sp. (strain YO3AOP1), this protein is ATP-dependent protease subunit HslV.